The chain runs to 176 residues: BPTI/Kunitz inhibitor domain-containing protein C02F12.5 (176 aa).

A signal peptide spans 1 to 17; the sequence is MLFFTLLIQLFLVPVLC. Positions 21 to 74 constitute a BPTI/Kunitz inhibitor domain; that stretch reads CSSELKFGTACSENKTSTKWYYDSKLLFCYPYKYLGCGEGSNSFESNENCLESC. Intrachain disulfides connect C21–C74, C31–C57, and C49–C70. N34 carries N-linked (GlcNAc...) asparagine glycosylation.

The chain is BPTI/Kunitz inhibitor domain-containing protein C02F12.5 from Caenorhabditis elegans.